The primary structure comprises 396 residues: Elongation factor Tu (396 aa).

In terms of domain architecture, tr-type G spans 10-206 (KAHVNIGTIG…AVDEYIPDPV (197 aa)). Residues 19–26 (GHVDHGKT) form a G1 region. Residue 19 to 26 (GHVDHGKT) coordinates GTP. Position 26 (Thr-26) interacts with Mg(2+). Positions 62-66 (GITIN) are G2. A G3 region spans residues 83–86 (DAPG). GTP is bound by residues 83 to 87 (DAPGH) and 138 to 141 (NKSD). The segment at 138–141 (NKSD) is G4. The G5 stretch occupies residues 176–178 (SAL).

The protein belongs to the TRAFAC class translation factor GTPase superfamily. Classic translation factor GTPase family. EF-Tu/EF-1A subfamily. As to quaternary structure, monomer.

It is found in the cytoplasm. The catalysed reaction is GTP + H2O = GDP + phosphate + H(+). In terms of biological role, GTP hydrolase that promotes the GTP-dependent binding of aminoacyl-tRNA to the A-site of ribosomes during protein biosynthesis. The sequence is that of Elongation factor Tu from Micrococcus luteus (Micrococcus lysodeikticus).